A 154-amino-acid polypeptide reads, in one-letter code: Protein X (154 aa).

Positions 68–117 (PCALRFTSARRMETTVNTHMILPKVLHKRTLGLPAMSTIDLEAYFKDCLF) are mitochondrial targeting sequence.

Belongs to the orthohepadnavirus protein X family. In terms of assembly, may form homodimer. May interact with host CEBPA, CFLAR, CREB1, DDB1, E4F1, HBXIP, HSPD1/HSP60, NFKBIA, POLR2E and SMAD4. Interacts with host SMC5-SMC6 complex and induces its degradation. Interacts with host TRPC4AP; leading to prevent ubiquitination of TRPC4AP. Interacts with host PLSCR1; this interaction promotes ubiquitination and degradation of HBx and impairs HBx-mediated cell proliferation. Post-translationally, a fraction may be phosphorylated in insect cells and HepG2 cells, a human hepatoblastoma cell line. Phosphorylated in vitro by host protein kinase C or mitogen-activated protein kinase. N-acetylated in insect cells.

The protein localises to the host cytoplasm. The protein resides in the host nucleus. It is found in the host mitochondrion. Multifunctional protein that plays a role in silencing host antiviral defenses and promoting viral transcription. Does not seem to be essential for HBV infection. May be directly involved in development of cirrhosis and liver cancer (hepatocellular carcinoma). Most of cytosolic activities involve modulation of cytosolic calcium. The effect on apoptosis is controversial depending on the cell types in which the studies have been conducted. May induce apoptosis by localizing in mitochondria and causing loss of mitochondrial membrane potential. May also modulate apoptosis by binding host CFLAR, a key regulator of the death-inducing signaling complex (DISC). Promotes viral transcription by using the host E3 ubiquitin ligase DDB1 to target the SMC5-SMC6 complex to proteasomal degradation. This host complex would otherwise bind to viral episomal DNA, and prevents its transcription. Moderately stimulates transcription of many different viral and cellular transcription elements. Promoters and enhancers stimulated by HBx contain DNA binding sites for NF-kappa-B, AP-1, AP-2, c-EBP, ATF/CREB, or the calcium-activated factor NF-AT. The protein is Protein X of Hepatitis B virus genotype C subtype ayw (isolate Australia/AustRC/1992) (HBV-C).